Reading from the N-terminus, the 788-residue chain is Protein kintoun (788 aa).

Disordered regions lie at residues 194–249 (LRKP…SEQD), 415–438 (NNSE…EISP), and 628–754 (HKEH…SSSV). Residues 225 to 241 (GKEKKDQKRVIKEEHKQ) are compositionally biased toward basic and acidic residues. Residues 417-427 (SEGLTSESNLD) are compositionally biased toward polar residues. Composition is skewed to basic and acidic residues over residues 628-644 (HKEH…DVGV) and 667-682 (ENTE…RYEE). 2 stretches are compositionally biased toward polar residues: residues 685-701 (STSC…QKDS) and 744-754 (NFDSRPASSSV).

This sequence belongs to the PIH1 family. Kintoun subfamily.

The protein localises to the cytoplasm. The protein resides in the dynein axonemal particle. Required for cytoplasmic pre-assembly of axonemal dyneins, thereby playing a central role in motility in cilia and flagella. Involved in pre-assembly of dynein arm complexes in the cytoplasm before intraflagellar transport loads them for the ciliary compartment. The sequence is that of Protein kintoun from Xenopus laevis (African clawed frog).